We begin with the raw amino-acid sequence, 233 residues long: MTKLSKRVKVIQSKIDRNKFYSLDDALNLVKECATAKFDESIDVAVQLGIDAKKSDQVVRGAVVLPAGTGKYVRVAVFAQGEKAEQAKAAGAEIVGMEDLADQIKSGKIDFDVLIASPDTMKIVGTLGQVLGPRGLMPNPKVGTVTPDVATAVKNAKAGQVQFRVDKAGIVHASIGRRSFEPTALKSNLLALLEALNKAKPPASKGVYLKKVAVSSTMGAGVRVDQASLQAAA.

This sequence belongs to the universal ribosomal protein uL1 family. In terms of assembly, part of the 50S ribosomal subunit.

Its function is as follows. Binds directly to 23S rRNA. The L1 stalk is quite mobile in the ribosome, and is involved in E site tRNA release. Functionally, protein L1 is also a translational repressor protein, it controls the translation of the L11 operon by binding to its mRNA. This Polynucleobacter necessarius subsp. necessarius (strain STIR1) protein is Large ribosomal subunit protein uL1.